We begin with the raw amino-acid sequence, 137 residues long: Cytochrome c-type biogenesis protein CcmE (137 aa).

Over 1-8 (MQKGAKNR) the chain is Cytoplasmic. Residues 9 to 29 (LITIIICFCSAVIGVSIILYN) form a helical; Signal-anchor for type II membrane protein membrane-spanning segment. Residues 30–137 (LEKSIVFFVP…NTVIPAKAGI (108 aa)) are Periplasmic-facing. Heme-binding residues include His-120 and Tyr-124.

Belongs to the CcmE/CycJ family.

It localises to the cell inner membrane. Heme chaperone required for the biogenesis of c-type cytochromes. Transiently binds heme delivered by CcmC and transfers the heme to apo-cytochromes in a process facilitated by CcmF and CcmH. The polypeptide is Cytochrome c-type biogenesis protein CcmE (Rickettsia bellii (strain OSU 85-389)).